The chain runs to 264 residues: Protein Saci_1508 (264 aa).

It belongs to the CinA family.

The sequence is that of Protein Saci_1508 from Sulfolobus acidocaldarius (strain ATCC 33909 / DSM 639 / JCM 8929 / NBRC 15157 / NCIMB 11770).